Reading from the N-terminus, the 541-residue chain is Glycogen synthase (541 aa).

Lys17 provides a ligand contact to ADP-alpha-D-glucose. A disordered region spans residues 497–541 (LARPASPPDTAPVGKPARRRRTTALSTTARAHPVARAAGREKIRA).

Belongs to the glycosyltransferase 1 family. Bacterial/plant glycogen synthase subfamily.

The catalysed reaction is [(1-&gt;4)-alpha-D-glucosyl](n) + ADP-alpha-D-glucose = [(1-&gt;4)-alpha-D-glucosyl](n+1) + ADP + H(+). The protein operates within glycan biosynthesis; glycogen biosynthesis. Synthesizes alpha-1,4-glucan chains using ADP-glucose. This chain is Glycogen synthase, found in Ralstonia nicotianae (strain ATCC BAA-1114 / GMI1000) (Ralstonia solanacearum).